The following is a 212-amino-acid chain: Probable NADH dehydrogenase [ubiquinone] iron-sulfur protein 8, mitochondrial (212 aa).

2 consecutive 4Fe-4S ferredoxin-type domains span residues R104–E133 and T143–N172. [4Fe-4S] cluster contacts are provided by C113, C116, C119, C123, C152, C155, C158, and C162.

The protein belongs to the complex I 23 kDa subunit family. In terms of assembly, complex I is composed of 45 different subunits This is a component of the iron-sulfur (IP) fragment of the enzyme. Requires [4Fe-4S] cluster as cofactor.

The protein localises to the mitochondrion. It carries out the reaction a ubiquinone + NADH + 5 H(+)(in) = a ubiquinol + NAD(+) + 4 H(+)(out). Functionally, core subunit of the mitochondrial membrane respiratory chain NADH dehydrogenase (Complex I) that is believed to belong to the minimal assembly required for catalysis. Complex I functions in the transfer of electrons from NADH to the respiratory chain. The immediate electron acceptor for the enzyme is believed to be ubiquinone. This chain is Probable NADH dehydrogenase [ubiquinone] iron-sulfur protein 8, mitochondrial, found in Caenorhabditis elegans.